The sequence spans 432 residues: Enolase (432 aa).

A (2R)-2-phosphoglycerate-binding site is contributed by Q167. The active-site Proton donor is the E209. Mg(2+)-binding residues include D246, E289, and D316. K341, R370, S371, and K392 together coordinate (2R)-2-phosphoglycerate. K341 functions as the Proton acceptor in the catalytic mechanism.

The protein belongs to the enolase family. Mg(2+) serves as cofactor.

The protein resides in the cytoplasm. It localises to the secreted. It is found in the cell surface. It carries out the reaction (2R)-2-phosphoglycerate = phosphoenolpyruvate + H2O. The protein operates within carbohydrate degradation; glycolysis; pyruvate from D-glyceraldehyde 3-phosphate: step 4/5. Its function is as follows. Catalyzes the reversible conversion of 2-phosphoglycerate (2-PG) into phosphoenolpyruvate (PEP). It is essential for the degradation of carbohydrates via glycolysis. In Petrotoga mobilis (strain DSM 10674 / SJ95), this protein is Enolase.